The following is a 29-amino-acid chain: Kunitz-type trypsin inhibitor IVTI (29 aa).

This sequence belongs to the protease inhibitor I3 (leguminous Kunitz-type inhibitor) family. In terms of assembly, monomer and dimer.

In terms of biological role, inhibits bovine trypsin but not chymotrypsin. Also inhibits trypsin-like enzymes from midgut of several lepidopteran species and inhibits larval development in those species. Has fungicidal activity against yeast C.buinensis. Has a bacteriostatic effect against E.coli. Is not cytotoxic. This chain is Kunitz-type trypsin inhibitor IVTI, found in Inga vera (River koko).